The chain runs to 143 residues: 16 kDa calcium-binding protein (143 aa).

EF-hand domains lie at 2 to 37, 41 to 71, 73 to 108, and 109 to 143; these read SEEK…VGVC, ADKI…LPPR, KCVA…SGMD, and IDQN…QTYK. Ca(2+) is bound by residues aspartate 15, aspartate 17, asparagine 19, glutamate 26, aspartate 49, asparagine 51, aspartate 53, lysine 55, glutamate 60, aspartate 86, aspartate 88, serine 90, lysine 92, glutamate 97, aspartate 122, asparagine 124, aspartate 126, glutamate 128, and glutamate 133.

In terms of tissue distribution, found in eggs.

Calcium-binding protein. The protein is 16 kDa calcium-binding protein of Schistosoma mansoni (Blood fluke).